The primary structure comprises 272 residues: Cyanophycinase (272 aa).

Residues Ser-132, Glu-150, and His-174 each act as charge relay system in the active site.

The protein belongs to the peptidase S51 family.

It carries out the reaction [L-4-(L-arginin-2-N-yl)aspartate](n) + H2O = [L-4-(L-arginin-2-N-yl)aspartate](n-1) + L-4-(L-arginin-2-N-yl)aspartate. Exopeptidase that catalyzes the hydrolytic cleavage of multi-L-arginyl-poly-L-aspartic acid (cyanophycin; a water-insoluble reserve polymer) into aspartate-arginine dipeptides. The sequence is that of Cyanophycinase (cphB) from Geminocystis herdmanii (strain PCC 6308) (Synechocystis sp. (strain PCC 6308)).